The following is a 176-amino-acid chain: Translation initiation factor IF-3 (176 aa).

The protein belongs to the IF-3 family. Monomer.

The protein resides in the cytoplasm. In terms of biological role, IF-3 binds to the 30S ribosomal subunit and shifts the equilibrium between 70S ribosomes and their 50S and 30S subunits in favor of the free subunits, thus enhancing the availability of 30S subunits on which protein synthesis initiation begins. The sequence is that of Translation initiation factor IF-3 from Microcystis aeruginosa (strain NIES-843 / IAM M-2473).